The sequence spans 555 residues: Glutamine--tRNA ligase (555 aa).

Positions proline 34–histidine 44 match the 'HIGH' region motif. ATP-binding positions include glutamate 35 to asparagine 37 and histidine 41 to serine 47. Residues aspartate 67 and tyrosine 212 each coordinate L-glutamine. Residues threonine 231, arginine 261–leucine 262, and methionine 269–lysine 271 contribute to the ATP site. Positions isoleucine 268–arginine 272 match the 'KMSKS' region motif.

Belongs to the class-I aminoacyl-tRNA synthetase family. In terms of assembly, monomer.

The protein resides in the cytoplasm. The enzyme catalyses tRNA(Gln) + L-glutamine + ATP = L-glutaminyl-tRNA(Gln) + AMP + diphosphate. This is Glutamine--tRNA ligase from Yersinia pseudotuberculosis serotype O:1b (strain IP 31758).